Consider the following 457-residue polypeptide: GTPase Der (457 aa).

2 EngA-type G domains span residues 4–169 and 177–352; these read PTIA…PENN and IMMS…NQHR. GTP is bound by residues 10–17, 57–61, 120–123, 183–190, 230–234, and 295–298; these read GRPNVGKS, DTGGL, NKCE, DTAGI, and NKWD. The 86-residue stretch at 353–438 folds into the KH-like domain; it reads RRVTTSVVNE…PLILLWRGKQ (86 aa).

This sequence belongs to the TRAFAC class TrmE-Era-EngA-EngB-Septin-like GTPase superfamily. EngA (Der) GTPase family. Associates with the 50S ribosomal subunit.

GTPase that plays an essential role in the late steps of ribosome biogenesis. In Prochlorococcus marinus (strain MIT 9215), this protein is GTPase Der.